The sequence spans 374 residues: Queuine tRNA-ribosyltransferase (374 aa).

The Proton acceptor role is filled by D89. Substrate-binding positions include 89-93 (DSGGF), D143, Q187, and G214. Positions 245–251 (GVGKPED) are RNA binding. D264 serves as the catalytic Nucleophile. Positions 269–273 (TRNAR) are RNA binding; important for wobble base 34 recognition. Residues C302, C304, C307, and H333 each contribute to the Zn(2+) site.

It belongs to the queuine tRNA-ribosyltransferase family. Homodimer. Within each dimer, one monomer is responsible for RNA recognition and catalysis, while the other monomer binds to the replacement base PreQ1. Zn(2+) serves as cofactor.

It carries out the reaction 7-aminomethyl-7-carbaguanine + guanosine(34) in tRNA = 7-aminomethyl-7-carbaguanosine(34) in tRNA + guanine. The protein operates within tRNA modification; tRNA-queuosine biosynthesis. Functionally, catalyzes the base-exchange of a guanine (G) residue with the queuine precursor 7-aminomethyl-7-deazaguanine (PreQ1) at position 34 (anticodon wobble position) in tRNAs with GU(N) anticodons (tRNA-Asp, -Asn, -His and -Tyr). Catalysis occurs through a double-displacement mechanism. The nucleophile active site attacks the C1' of nucleotide 34 to detach the guanine base from the RNA, forming a covalent enzyme-RNA intermediate. The proton acceptor active site deprotonates the incoming PreQ1, allowing a nucleophilic attack on the C1' of the ribose to form the product. After dissociation, two additional enzymatic reactions on the tRNA convert PreQ1 to queuine (Q), resulting in the hypermodified nucleoside queuosine (7-(((4,5-cis-dihydroxy-2-cyclopenten-1-yl)amino)methyl)-7-deazaguanosine). This is Queuine tRNA-ribosyltransferase from Shewanella frigidimarina (strain NCIMB 400).